The following is a 471-amino-acid chain: Ribulose bisphosphate carboxylase large chain (471 aa).

Substrate-binding residues include asparagine 115 and threonine 165. The active-site Proton acceptor is the lysine 167. Residue lysine 169 participates in substrate binding. 3 residues coordinate Mg(2+): lysine 193, aspartate 195, and glutamate 196. Position 193 is an N6-carboxylysine (lysine 193). Residue histidine 286 is the Proton acceptor of the active site. Positions 287, 319, and 371 each coordinate substrate.

The protein belongs to the RuBisCO large chain family. Type I subfamily. In terms of assembly, heterohexadecamer of 8 large chains and 8 small chains. Forms a CsoS2-CsoS1-RuBisCO complex. Mg(2+) serves as cofactor.

It localises to the carboxysome. It carries out the reaction 2 (2R)-3-phosphoglycerate + 2 H(+) = D-ribulose 1,5-bisphosphate + CO2 + H2O. It catalyses the reaction D-ribulose 1,5-bisphosphate + O2 = 2-phosphoglycolate + (2R)-3-phosphoglycerate + 2 H(+). Its function is as follows. RuBisCO catalyzes two reactions: the carboxylation of D-ribulose 1,5-bisphosphate, the primary event in carbon dioxide fixation, as well as the oxidative fragmentation of the pentose substrate in the photorespiration process. Both reactions occur simultaneously and in competition at the same active site. The protein is Ribulose bisphosphate carboxylase large chain of Parasynechococcus marenigrum (strain WH8102).